The chain runs to 718 residues: MDKVQQQADLFGKTISPFVASQPTNVGGFTDQKIIGGSETTQPPATSPPSPPSPDTQTSPPPATAAQPPPNQPPNTTPPPTPPSSPPPSITPPPSPPQPQPPPQSTPTGDSPVVIPFPKPQLPPPSLFPPPSLVNQLPDPRPNDNNILEPINNPISLPSPPSTPFSPPSQENSGSQGSPPLSSLLPPMLPLNPNSPGNPLQPLDSPLGGESNRVPSSSSSPSPPSLSGSNNHSGGSNRHNANSNGDGGTSQQSNESNYTEKTVIGIGIAGVLVILFIAGVFFVRRKQKKGSSSPRSNQYLPPANVSVNTEGFIHYRQKPGNGNSSAQNSSPDTNSLGNPKHGRGTPDSAVIGTSKIHFTYEELSQITEGFCKSFVVGEGGFGCVYKGILFEGKPVAIKQLKSVSAEGYREFKAEVEIISRVHHRHLVSLVGYCISEQHRFLIYEFVPNNTLDYHLHGKNLPVLEWSRRVRIAIGAAKGLAYLHEDCHPKIIHRDIKSSNILLDDEFEAQVADFGLARLNDTAQSHISTRVMGTFGYLAPEYASSGKLTDRSDVFSFGVVLLELITGRKPVDTSQPLGEESLVEWARPRLIEAIEKGDISEVVDPRLENDYVESEVYKMIETAASCVRHSALKRPRMVQVVRALDTRDDLSDLTNGVKVGQSRVYDSGQYSNEIRIFRRASEDSSDLGTNTGYYPSQDYATSHEYESESRAFNTSHRNH.

A disordered region spans residues 1–256 (MDKVQQQADL…GGTSQQSNES (256 aa)). Over 1–262 (MDKVQQQADL…SNESNYTEKT (262 aa)) the chain is Extracellular. Pro residues-rich tracts occupy residues 45 to 105 (ATSP…PPQS), 115 to 132 (IPFP…PPPS), and 157 to 167 (LPSPPSTPFSP). Low complexity-rich tracts occupy residues 168–203 (PSQE…LQPL) and 211–244 (SNRV…ANSN). Residues asparagine 231, asparagine 254, and asparagine 257 are each glycosylated (N-linked (GlcNAc...) asparagine). The chain crosses the membrane as a helical span at residues 263–283 (VIGIGIAGVLVILFIAGVFFV). At 284–718 (RRKQKKGSSS…RAFNTSHRNH (435 aa)) the chain is on the cytoplasmic side. Residues 314–348 (HYRQKPGNGNSSAQNSSPDTNSLGNPKHGRGTPDS) form a disordered region. Polar residues predominate over residues 320–337 (GNGNSSAQNSSPDTNSLG). At threonine 359 the chain carries Phosphothreonine. The Protein kinase domain occupies 370-649 (FCKSFVVGEG…VRALDTRDDL (280 aa)). ATP is bound by residues 376–384 (VGEGGFGCV) and lysine 398. The residue at position 443 (tyrosine 443) is a Phosphotyrosine. Aspartate 494 functions as the Proton acceptor in the catalytic mechanism. 2 positions are modified to phosphoserine: serine 498 and serine 527. Phosphothreonine is present on residues threonine 528 and threonine 533. At tyrosine 541 the chain carries Phosphotyrosine. A disordered region spans residues 683-718 (SSDLGTNTGYYPSQDYATSHEYESESRAFNTSHRNH). Polar residues-rich tracts occupy residues 685–699 (DLGT…QDYA) and 709–718 (RAFNTSHRNH).

Belongs to the protein kinase superfamily. Ser/Thr protein kinase family. As to expression, mostly expressed in flower buds.

The protein localises to the cell membrane. It carries out the reaction L-seryl-[protein] + ATP = O-phospho-L-seryl-[protein] + ADP + H(+). It catalyses the reaction L-threonyl-[protein] + ATP = O-phospho-L-threonyl-[protein] + ADP + H(+). The polypeptide is Putative proline-rich receptor-like protein kinase PERK11 (PERK11) (Arabidopsis thaliana (Mouse-ear cress)).